The sequence spans 383 residues: UDP-N-acetylenolpyruvoylglucosamine reductase (383 aa).

Residues 1-13 (MRTRRDVPADRSG) are compositionally biased toward basic and acidic residues. The segment at 1-26 (MRTRRDVPADRSGRSRVSRHPGLSVP) is disordered. Residues 49–215 (LGGPATRLLT…LRVRFELENA (167 aa)) form the FAD-binding PCMH-type domain. Arg192 is a catalytic residue. Residue Ser271 is the Proton donor of the active site. Glu375 is a catalytic residue.

Belongs to the MurB family. Requires FAD as cofactor.

Its subcellular location is the cytoplasm. It carries out the reaction UDP-N-acetyl-alpha-D-muramate + NADP(+) = UDP-N-acetyl-3-O-(1-carboxyvinyl)-alpha-D-glucosamine + NADPH + H(+). Its pathway is cell wall biogenesis; peptidoglycan biosynthesis. Its function is as follows. Cell wall formation. The chain is UDP-N-acetylenolpyruvoylglucosamine reductase from Streptomyces coelicolor (strain ATCC BAA-471 / A3(2) / M145).